The following is a 576-amino-acid chain: V-type ATP synthase alpha chain (576 aa).

238-245 (GPFGAGKT) is a binding site for ATP.

Belongs to the ATPase alpha/beta chains family.

The enzyme catalyses ATP + H2O + 4 H(+)(in) = ADP + phosphate + 5 H(+)(out). Produces ATP from ADP in the presence of a proton gradient across the membrane. The V-type alpha chain is a catalytic subunit. This is V-type ATP synthase alpha chain from Borrelia turicatae (strain 91E135).